The sequence spans 202 residues: FMN-dependent NADH:quinone oxidoreductase (202 aa).

FMN contacts are provided by residues Ser-10, 16–18, and 96–99; these read SAS and MWNF.

Belongs to the azoreductase type 1 family. Homodimer. FMN is required as a cofactor.

It carries out the reaction 2 a quinone + NADH + H(+) = 2 a 1,4-benzosemiquinone + NAD(+). It catalyses the reaction N,N-dimethyl-1,4-phenylenediamine + anthranilate + 2 NAD(+) = 2-(4-dimethylaminophenyl)diazenylbenzoate + 2 NADH + 2 H(+). Its function is as follows. Quinone reductase that provides resistance to thiol-specific stress caused by electrophilic quinones. Also exhibits azoreductase activity. Catalyzes the reductive cleavage of the azo bond in aromatic azo compounds to the corresponding amines. In Beijerinckia indica subsp. indica (strain ATCC 9039 / DSM 1715 / NCIMB 8712), this protein is FMN-dependent NADH:quinone oxidoreductase.